Reading from the N-terminus, the 1218-residue chain is ATP-dependent helicase/deoxyribonuclease subunit B (1218 aa).

Positions 1–279 (MRFIVGRAGT…VFLTETHRFE (279 aa)) constitute a UvrD-like helicase ATP-binding domain. Residue 6-13 (GRAGTGKS) participates in ATP binding. In terms of domain architecture, UvrD-like helicase C-terminal spans 281-588 (AGLKHLERFY…LVGSLDRSRN (308 aa)). Cysteine 786 lines the [4Fe-4S] cluster pocket. The segment at 987–1006 (LAEGSKGSEGSEGSEDSEDS) is disordered. Positions 1126, 1129, and 1135 each coordinate [4Fe-4S] cluster. Residues 1160 to 1169 (RVQSQDSEQY) are compositionally biased toward polar residues. The interval 1160–1218 (RVQSQDSEQYPEQHPPTSVPGETSRRALQKDGGNSPRGQELIWLGEDEAGAGKEDDGHE) is disordered. Basic and acidic residues predominate over residues 1209–1218 (GAGKEDDGHE).

Belongs to the helicase family. AddB/RexB type 1 subfamily. In terms of assembly, heterodimer of AddA and AddB. Requires Mg(2+) as cofactor. [4Fe-4S] cluster serves as cofactor.

Its function is as follows. The heterodimer acts as both an ATP-dependent DNA helicase and an ATP-dependent, dual-direction single-stranded exonuclease. Recognizes the chi site generating a DNA molecule suitable for the initiation of homologous recombination. The AddB subunit has 5' -&gt; 3' nuclease activity but not helicase activity. This is ATP-dependent helicase/deoxyribonuclease subunit B from Desulfitobacterium hafniense (strain DSM 10664 / DCB-2).